Reading from the N-terminus, the 145-residue chain is Eukaryotic translation initiation factor 1A (145 aa).

A compositionally biased stretch (basic residues) spans 1-15 (MPKNKGKGGKNRKRG). The tract at residues 1 to 25 (MPKNKGKGGKNRKRGKNEADDDKRE) is disordered. Positions 16-25 (KNEADDDKRE) are enriched in basic and acidic residues. In terms of domain architecture, S1-like spans 22 to 96 (DKRELVFKED…DKADVILKLM (75 aa)).

Belongs to the eIF-1A family.

In terms of biological role, seems to be required for maximal rate of protein biosynthesis. Enhances ribosome dissociation into subunits and stabilizes the binding of the initiator Met-tRNA(I) to 40 S ribosomal subunits. In Onobrychis viciifolia (Common sainfoin), this protein is Eukaryotic translation initiation factor 1A.